We begin with the raw amino-acid sequence, 271 residues long: Type III pantothenate kinase (271 aa).

Residue 6–13 (DVRNTHTV) participates in ATP binding. Residue 109–112 (GADR) participates in substrate binding. Asp111 acts as the Proton acceptor in catalysis. Asp131 contacts K(+). Position 134 (Ser134) interacts with ATP. Thr186 contacts substrate.

The protein belongs to the type III pantothenate kinase family. In terms of assembly, homodimer. It depends on NH4(+) as a cofactor. K(+) serves as cofactor.

It localises to the cytoplasm. The catalysed reaction is (R)-pantothenate + ATP = (R)-4'-phosphopantothenate + ADP + H(+). It participates in cofactor biosynthesis; coenzyme A biosynthesis; CoA from (R)-pantothenate: step 1/5. Its function is as follows. Catalyzes the phosphorylation of pantothenate (Pan), the first step in CoA biosynthesis. In Mycobacteroides abscessus (strain ATCC 19977 / DSM 44196 / CCUG 20993 / CIP 104536 / JCM 13569 / NCTC 13031 / TMC 1543 / L948) (Mycobacterium abscessus), this protein is Type III pantothenate kinase.